Reading from the N-terminus, the 510-residue chain is ATP synthase subunit alpha, mitochondrial (510 aa).

171 to 178 (GDRQTGKT) provides a ligand contact to ATP.

The protein belongs to the ATPase alpha/beta chains family. In terms of assembly, F-type ATPases have 2 components, CF(1) - the catalytic core - and CF(0) - the membrane proton channel. CF(1) has five subunits: alpha(3), beta(3), gamma(1), delta(1), epsilon(1). CF(0) has three main subunits: a, b and c.

Its subcellular location is the mitochondrion. It is found in the mitochondrion inner membrane. Its function is as follows. Mitochondrial membrane ATP synthase (F(1)F(0) ATP synthase or Complex V) produces ATP from ADP in the presence of a proton gradient across the membrane which is generated by electron transport complexes of the respiratory chain. F-type ATPases consist of two structural domains, F(1) - containing the extramembraneous catalytic core, and F(0) - containing the membrane proton channel, linked together by a central stalk and a peripheral stalk. During catalysis, ATP synthesis in the catalytic domain of F(1) is coupled via a rotary mechanism of the central stalk subunits to proton translocation. Subunits alpha and beta form the catalytic core in F(1). Rotation of the central stalk against the surrounding alpha(3)beta(3) subunits leads to hydrolysis of ATP in three separate catalytic sites on the beta subunits. Subunit alpha does not bear the catalytic high-affinity ATP-binding sites. The protein is ATP synthase subunit alpha, mitochondrial (ATPA) of Helianthus annuus (Common sunflower).